A 103-amino-acid polypeptide reads, in one-letter code: Large ribosomal subunit protein bL21 (103 aa).

It belongs to the bacterial ribosomal protein bL21 family. As to quaternary structure, part of the 50S ribosomal subunit. Contacts protein L20.

Its function is as follows. This protein binds to 23S rRNA in the presence of protein L20. This chain is Large ribosomal subunit protein bL21, found in Yersinia enterocolitica serotype O:8 / biotype 1B (strain NCTC 13174 / 8081).